Here is a 350-residue protein sequence, read N- to C-terminus: Methionine import ATP-binding protein MetN (350 aa).

The ABC transporter domain occupies Ile-2–Val-241. Gly-38–Ser-45 is an ATP binding site.

It belongs to the ABC transporter superfamily. Methionine importer (TC 3.A.1.24) family. As to quaternary structure, the complex is composed of two ATP-binding proteins (MetN), two transmembrane proteins (MetI) and a solute-binding protein (MetQ).

Its subcellular location is the cell inner membrane. The enzyme catalyses L-methionine(out) + ATP + H2O = L-methionine(in) + ADP + phosphate + H(+). It catalyses the reaction D-methionine(out) + ATP + H2O = D-methionine(in) + ADP + phosphate + H(+). Functionally, part of the ABC transporter complex MetNIQ involved in methionine import. Responsible for energy coupling to the transport system. The protein is Methionine import ATP-binding protein MetN of Francisella tularensis subsp. holarctica (strain LVS).